The primary structure comprises 331 residues: Ketol-acid reductoisomerase (NADP(+)) (331 aa).

A KARI N-terminal Rossmann domain is found at 2–182 (ARMYYDSDAN…GGTRAGILET (181 aa)). NADP(+) is bound by residues 25 to 28 (YGSQ), serine 51, serine 53, and 83 to 86 (DEVQ). Histidine 108 is an active-site residue. Glycine 134 contacts NADP(+). A KARI C-terminal knotted domain is found at 183–328 (TFREETETDL…KDLRAMFSWL (146 aa)). The Mg(2+) site is built by aspartate 191, glutamate 195, glutamate 227, and glutamate 231. Serine 252 provides a ligand contact to substrate.

Belongs to the ketol-acid reductoisomerase family. Requires Mg(2+) as cofactor.

The catalysed reaction is (2R)-2,3-dihydroxy-3-methylbutanoate + NADP(+) = (2S)-2-acetolactate + NADPH + H(+). The enzyme catalyses (2R,3R)-2,3-dihydroxy-3-methylpentanoate + NADP(+) = (S)-2-ethyl-2-hydroxy-3-oxobutanoate + NADPH + H(+). The protein operates within amino-acid biosynthesis; L-isoleucine biosynthesis; L-isoleucine from 2-oxobutanoate: step 2/4. It functions in the pathway amino-acid biosynthesis; L-valine biosynthesis; L-valine from pyruvate: step 2/4. In terms of biological role, involved in the biosynthesis of branched-chain amino acids (BCAA). Catalyzes an alkyl-migration followed by a ketol-acid reduction of (S)-2-acetolactate (S2AL) to yield (R)-2,3-dihydroxy-isovalerate. In the isomerase reaction, S2AL is rearranged via a Mg-dependent methyl migration to produce 3-hydroxy-3-methyl-2-ketobutyrate (HMKB). In the reductase reaction, this 2-ketoacid undergoes a metal-dependent reduction by NADPH to yield (R)-2,3-dihydroxy-isovalerate. This is Ketol-acid reductoisomerase (NADP(+)) from Trichodesmium erythraeum (strain IMS101).